The primary structure comprises 622 residues: Iron transport multicopper oxidase fio1 (622 aa).

An N-terminal signal peptide occupies residues 1-22; the sequence is MNKFFSFPILGLLLTCVRFVVA. Residues 23 to 553 lie on the Extracellular side of the membrane; that stretch reads KERLFEWNVT…GEMPAGWTSK (531 aa). N-linked (GlcNAc...) asparagine glycans are attached at residues Asn30 and Asn79. Plastocyanin-like domains lie at 49-147 and 194-304; these read IGVN…FIIN and TGLF…LSYN. Positions 85 and 87 each coordinate Cu cation. N-linked (GlcNAc...) asparagine glycans are attached at residues Asn117 and Asn123. Cu cation contacts are provided by His129 and His131. Residues Asn198, Asn202, Asn234, Asn269, Asn296, Asn338, Asn360, and Asn376 are each glycosylated (N-linked (GlcNAc...) asparagine). The Plastocyanin-like 3 domain maps to 386-498; the sequence is EPVTYGPYTN…SGLLATFIEA (113 aa). Cu cation-binding residues include His417, His420, His422, His480, Cys481, His482, and His486. A glycan (N-linked (GlcNAc...) asparagine) is linked at Asn532. A helical membrane pass occupies residues 554 to 574; sequence AIGTMAACVISACIGMGSIIF. At 575–622 the chain is on the cytoplasmic side; sequence YGASIHPVPTEELDENDDLQEAALENAAMFLDTDKAVEKVVEGKDEIK.

The protein belongs to the multicopper oxidase family. The cofactor is Cu cation.

It localises to the cell membrane. Functionally, could be an iron transport multicopper oxidase, which is required for Fe(2+) high affinity uptake. May be required to oxidize Fe(2+) and release it from the transporter. Essential component of copper-dependent iron transport. This chain is Iron transport multicopper oxidase fio1 (fio1), found in Schizosaccharomyces pombe (strain 972 / ATCC 24843) (Fission yeast).